The sequence spans 214 residues: MTDSSPQSNPNAVPGAADVPAAAEGQQQQEQRRGRGDRDGRRGDRRGGRRGQERDSEWQERVVQIRRVSKTVKGGKKMSFRAIVVVGNEKGQVGVGVGKAGDVIGAVRKGVADGKKHLVKVPLTRHNSIPTLSNGRDGAASVLIRPAAPGTGVIAGGSIRTVLELAGIKNVLAKRLGSKTPLNNARAAMVALSLLRTHKETAKERGISLEQIYS.

The segment at 1–61 is disordered; it reads MTDSSPQSNP…QERDSEWQER (61 aa). The segment covering 9-29 has biased composition (low complexity); the sequence is NPNAVPGAADVPAAAEGQQQQ. Residues 30–60 show a composition bias toward basic and acidic residues; it reads EQRRGRGDRDGRRGDRRGGRRGQERDSEWQE. Positions 58–121 constitute an S5 DRBM domain; that stretch reads WQERVVQIRR…ADGKKHLVKV (64 aa).

This sequence belongs to the universal ribosomal protein uS5 family. As to quaternary structure, part of the 30S ribosomal subunit. Contacts proteins S4 and S8.

In terms of biological role, with S4 and S12 plays an important role in translational accuracy. Functionally, located at the back of the 30S subunit body where it stabilizes the conformation of the head with respect to the body. The chain is Small ribosomal subunit protein uS5 from Synechococcus sp. (strain CC9605).